The chain runs to 199 residues: Recombination protein RecR (199 aa).

The C4-type zinc-finger motif lies at 58–73 (CSVCTNLTDRDPCRIC). Positions 81 to 176 (AVICVVEEPR…KVTRIAHGLP (96 aa)) constitute a Toprim domain.

This sequence belongs to the RecR family.

Functionally, may play a role in DNA repair. It seems to be involved in an RecBC-independent recombinational process of DNA repair. It may act with RecF and RecO. This is Recombination protein RecR from Heliobacterium modesticaldum (strain ATCC 51547 / Ice1).